We begin with the raw amino-acid sequence, 449 residues long: Jacalin-related lectin 20 (449 aa).

2 disordered regions span residues 1–20 and 294–314; these read MAQRLEAKGGKGGNQWDDGA and APPIPPPPPTEKLQGSGGDGG. Ala-2 bears the N-acetylalanine mark. Jacalin-type lectin domains follow at residues 2-144, 147-294, and 303-446; these read AQRL…YFTP, PIKQ…HFGA, and TEKL…TVAP.

It belongs to the jacalin lectin family.

The protein is Jacalin-related lectin 20 (JAL20) of Arabidopsis thaliana (Mouse-ear cress).